The following is a 622-amino-acid chain: Probable potassium transport system protein Kup (622 aa).

Transmembrane regions (helical) follow at residues 8-28 (LAVL…TSVL), 50-70 (ILSI…VSLV), 101-121 (VLLL…VITP), 137-157 (PTFT…LFAM), 165-185 (IGKF…LLGV), 213-233 (ITFI…ALYA), 247-267 (WFSV…ALLL), 285-305 (ALIP…QALI), 337-357 (IYMP…VVMF), 366-386 (AYGI…FYVI), 393-413 (PLAL…AFFA), and 419-439 (LFAG…LMIT).

This sequence belongs to the HAK/KUP transporter (TC 2.A.72) family.

The protein localises to the cell inner membrane. The catalysed reaction is K(+)(in) + H(+)(in) = K(+)(out) + H(+)(out). Functionally, transport of potassium into the cell. Likely operates as a K(+):H(+) symporter. In Polaromonas naphthalenivorans (strain CJ2), this protein is Probable potassium transport system protein Kup.